Consider the following 102-residue polypeptide: Membrane-bound protein LytA (102 aa).

Residues 1-16 (MKKFIALLFFILLLSG) form the signal peptide. Residue Cys-17 is the site of N-palmitoyl cysteine attachment. Cys-17 carries the S-diacylglycerol cysteine lipid modification.

It localises to the cell membrane. In terms of biological role, possible role in the secretion of LytB and LytC. This is Membrane-bound protein LytA (lytA) from Bacillus subtilis (strain 168).